The chain runs to 366 residues: MMQPIKKIAILTGGGDCPGLNAVIRAVTRTAILKYGYEVIGYKFGYRGLYNNDFVKLDLDSVSGILHRGGTILHSSNKDNLFDYQVEDENGKIVKKDVSDVGVENLKKEGVDALVVIGGDGTLTSARDFSRKGVNVIGVPKTIDNDLLATDVTFGFNTATEIATEALDRLHTTAESHHRIMLLEVMGRNAGWIALESGIAGSADVILLPEIPYDINKIVEKVKEREEAGKQFTIIVVAEGAKPKDGEVVVSKIVDDSPDPIRLGGIANKLAIDLEGLIKNHEIRSTVLGHIQRGGNTSTYDRILSTKYGVKAVELINSNLFGNMVALKGNKVSYESLENVIGHTKNVDPEGELVNTAKSIGISFAD.

Residues Gly15, 78-79 (KD), and 119-122 (GDGT) each bind ATP. Asp120 is a binding site for Mg(2+). Residues 142-144 (TID), Arg179, 186-188 (MGR), Glu239, Arg284, and 290-293 (HIQR) contribute to the substrate site. Asp144 (proton acceptor) is an active-site residue.

It belongs to the phosphofructokinase type A (PFKA) family. Mixed-substrate PFK group III subfamily. As to quaternary structure, homodimer or homotetramer. Mg(2+) serves as cofactor.

The protein resides in the cytoplasm. It catalyses the reaction beta-D-fructose 6-phosphate + ATP = beta-D-fructose 1,6-bisphosphate + ADP + H(+). The protein operates within carbohydrate degradation; glycolysis; D-glyceraldehyde 3-phosphate and glycerone phosphate from D-glucose: step 3/4. Its activity is regulated as follows. Subject to allosteric activation by ADP and other diphosphonucleosides, and inhibition by phosphoenolpyruvate. In terms of biological role, catalyzes the phosphorylation of D-fructose 6-phosphate to fructose 1,6-bisphosphate by ATP, the first committing step of glycolysis. The sequence is that of ATP-dependent 6-phosphofructokinase 2 from Clostridium perfringens (strain 13 / Type A).